The chain runs to 332 residues: Methylthioribose-1-phosphate isomerase (332 aa).

Substrate-binding positions include 44-46 (RGA), R87, and Q192. Catalysis depends on D233, which acts as the Proton donor. Residue 243-244 (NK) participates in substrate binding.

This sequence belongs to the eIF-2B alpha/beta/delta subunits family. MtnA subfamily.

It carries out the reaction 5-(methylsulfanyl)-alpha-D-ribose 1-phosphate = 5-(methylsulfanyl)-D-ribulose 1-phosphate. Its pathway is amino-acid biosynthesis; L-methionine biosynthesis via salvage pathway; L-methionine from S-methyl-5-thio-alpha-D-ribose 1-phosphate: step 1/6. Catalyzes the interconversion of methylthioribose-1-phosphate (MTR-1-P) into methylthioribulose-1-phosphate (MTRu-1-P). This Dehalococcoides mccartyi (strain ATCC BAA-2100 / JCM 16839 / KCTC 5957 / BAV1) protein is Methylthioribose-1-phosphate isomerase.